A 396-amino-acid chain; its full sequence is DnaJ homolog subfamily A member 1 (396 aa).

The J domain occupies 6 to 68; the sequence is TYYDVLGVKP…KKRELYDKGG (63 aa). An N6-acetyllysine modification is found at K66. At S83 the chain carries Phosphoserine. The CR-type zinc finger occupies 120–204; that stretch reads GATRKLALQK…CNGRKIVREK (85 aa). 8 residues coordinate Zn(2+): C133, C136, C149, C152, C176, C179, C192, and C195. CXXCXGXG motif repeat units lie at residues 133 to 140, 149 to 156, 176 to 183, and 192 to 199; these read CDKCEGRG, CPNCRGTG, CMECQGHG, and CKSCNGRK. At S334 the chain carries Phosphoserine. A disordered region spans residues 351 to 396; the sequence is VEETDEMDQVELVDFDPNQERRRHYNGEAYEDDEHHPRGGVQCQTS. The segment covering 352-364 has biased composition (acidic residues); it reads EETDEMDQVELVD. Y380 bears the Phosphotyrosine mark. C393 bears the Cysteine methyl ester mark. C393 is lipidated: S-farnesyl cysteine. The propeptide at 394-396 is removed in mature form; sequence QTS.

Identified in a complex with HSPA1B and BAX. Interacts with RNF207.

It localises to the membrane. The protein resides in the cytoplasm. Its subcellular location is the microsome. The protein localises to the mitochondrion. It is found in the nucleus. It localises to the perinuclear region. Its function is as follows. Co-chaperone for HSPA8/Hsc70. Plays a role in protein transport into mitochondria via its role as co-chaperone. Functions as co-chaperone for HSPA1B and negatively regulates the translocation of BAX from the cytosol to mitochondria in response to cellular stress, thereby protecting cells against apoptosis. Stimulates ATP hydrolysis, but not the folding of unfolded proteins mediated by HSPA1A (in vitro). Promotes apoptosis in response to cellular stress mediated by exposure to anisomycin or UV. The sequence is that of DnaJ homolog subfamily A member 1 (DNAJA1) from Pongo abelii (Sumatran orangutan).